The chain runs to 451 residues: MKDEQLYYFEKSPVFKAMMHFSLPMMIGTLLSVIYGILNIYFIGFLEDSHMISAISLTLPVFAILMGLGNLFGVGAGTYISRLLGAKDYSKSKFVSSFSIYGGIALGLIVILVTLPFSDQIAAILGARGETLALTSNYLKVMFLSAPFVILFFILEQFARAIGAPMISMIGMLASVGLNIILDPILIFGFDLNVVGAALGTAISNVAAALFFIIYFMKNSDVVSVNIKLAKPNKEMLSEIFKIGIPAFLMSILMGFTGLVLNLFLAHYGNFAIASYGISFRLVQFPELIIMGLCEGVVPLIAYNFMANKGRMKDVIKAVIMSIGVIFVVCMIAVFTIGHHMVGLFTTDQAIVEMATFILKVTMASLLLNGIGFLFTGMLQATGQGRGATIMAILQGAIIIPVLFIMNALFGLTGVIWSLLIAESLCALAAMLIVYLLRDRLTVDTSELIEG.

The next 12 helical transmembrane spans lie at 26–46 (MIGT…IGFL), 54–74 (AISL…LFGV), 97–117 (SFSI…TLPF), 139–159 (LKVM…EQFA), 170–190 (IGML…IFGF), 194–214 (VVGA…FFII), 245–265 (IPAF…NLFL), 282–302 (LVQF…PLIA), 318–338 (AVIM…FTIG), 355–375 (ATFI…GFLF), 397–417 (AIII…GVIW), and 418–438 (SLLI…YLLR).

The protein belongs to the multi antimicrobial extrusion (MATE) (TC 2.A.66.1) family. MepA subfamily.

The protein resides in the cell membrane. Its function is as follows. Multidrug resistance efflux protein. Contributes to resistance to the glycylcycline antibiotic tigecycline. This Staphylococcus aureus (strain N315) protein is Multidrug export protein MepA (mepA).